The sequence spans 256 residues: 1-(5-phosphoribosyl)-5-[(5-phosphoribosylamino)methylideneamino] imidazole-4-carboxamide isomerase (256 aa).

Residue aspartate 8 is the Proton acceptor of the active site. The Proton donor role is filled by aspartate 130.

Belongs to the HisA/HisF family.

Its subcellular location is the cytoplasm. It carries out the reaction 1-(5-phospho-beta-D-ribosyl)-5-[(5-phospho-beta-D-ribosylamino)methylideneamino]imidazole-4-carboxamide = 5-[(5-phospho-1-deoxy-D-ribulos-1-ylimino)methylamino]-1-(5-phospho-beta-D-ribosyl)imidazole-4-carboxamide. It functions in the pathway amino-acid biosynthesis; L-histidine biosynthesis; L-histidine from 5-phospho-alpha-D-ribose 1-diphosphate: step 4/9. This is 1-(5-phosphoribosyl)-5-[(5-phosphoribosylamino)methylideneamino] imidazole-4-carboxamide isomerase from Pelodictyon phaeoclathratiforme (strain DSM 5477 / BU-1).